Here is a 391-residue protein sequence, read N- to C-terminus: S-adenosylmethionine synthase (391 aa).

Histidine 14 contacts ATP. A Mg(2+)-binding site is contributed by aspartate 16. K(+) is bound at residue glutamate 42. Residues glutamate 55 and glutamine 98 each coordinate L-methionine. A flexible loop region spans residues 98 to 108 (QSPDIAMGVDE). ATP contacts are provided by residues 172–174 (DGK), 238–239 (RF), aspartate 247, 253–254 (RK), alanine 270, and lysine 274. Residue aspartate 247 participates in L-methionine binding. Lysine 278 provides a ligand contact to L-methionine.

The protein belongs to the AdoMet synthase family. As to quaternary structure, homotetramer; dimer of dimers. It depends on Mg(2+) as a cofactor. Requires K(+) as cofactor.

It is found in the cytoplasm. It catalyses the reaction L-methionine + ATP + H2O = S-adenosyl-L-methionine + phosphate + diphosphate. It functions in the pathway amino-acid biosynthesis; S-adenosyl-L-methionine biosynthesis; S-adenosyl-L-methionine from L-methionine: step 1/1. Catalyzes the formation of S-adenosylmethionine (AdoMet) from methionine and ATP. The overall synthetic reaction is composed of two sequential steps, AdoMet formation and the subsequent tripolyphosphate hydrolysis which occurs prior to release of AdoMet from the enzyme. The polypeptide is S-adenosylmethionine synthase (Clostridium tetani (strain Massachusetts / E88)).